Consider the following 206-residue polypeptide: Ribosomal RNA small subunit methyltransferase G (206 aa).

Residues Gly74, Leu79, Val125–Glu126, and Arg140 each bind S-adenosyl-L-methionine.

Belongs to the methyltransferase superfamily. RNA methyltransferase RsmG family.

It localises to the cytoplasm. The catalysed reaction is guanosine(527) in 16S rRNA + S-adenosyl-L-methionine = N(7)-methylguanosine(527) in 16S rRNA + S-adenosyl-L-homocysteine. Its function is as follows. Specifically methylates the N7 position of guanine in position 527 of 16S rRNA. In Shewanella baltica (strain OS223), this protein is Ribosomal RNA small subunit methyltransferase G.